The chain runs to 482 residues: uncharacterized protein (482 aa).

The 75-residue stretch at 5 to 79 folds into the DWNN domain; the sequence is IYYKFKSQKD…STSVIVRRVP (75 aa). The disordered stretch occupies residues 86 to 108; the sequence is GTAARYVSGAPKTTGARSDSVKR. Residues 183–200 form a CCHC-type zinc finger; the sequence is YICYRCGQKGHWIQACPT. Residues 282–322 form an RING-type; degenerate zinc finger; it reads CTLCKKLARNACRTPCCDKLFCEECIQTALLDSDFECPNCH. 2 disordered regions span residues 346 to 393 and 447 to 482; these read KSVL…SSAV and QVYH…TKTN. A compositionally biased stretch (low complexity) spans 451-466; sequence NNRNPPRTNSRPSNAS.

It localises to the nucleus. This is an uncharacterized protein from Schizosaccharomyces pombe (strain 972 / ATCC 24843) (Fission yeast).